A 166-amino-acid polypeptide reads, in one-letter code: Co-chaperone protein HscB homolog (166 aa).

The J domain maps to 3 to 75; sequence QYFTLFRIEP…IDRAAYLLKT (73 aa).

Belongs to the HscB family. Interacts with HscA and stimulates its ATPase activity.

Co-chaperone involved in the maturation of iron-sulfur cluster-containing proteins. Seems to help targeting proteins to be folded toward HscA. This is Co-chaperone protein HscB homolog from Neisseria meningitidis serogroup A / serotype 4A (strain DSM 15465 / Z2491).